We begin with the raw amino-acid sequence, 420 residues long: Tyrosine--tRNA ligase (420 aa).

Residue Tyr36 participates in L-tyrosine binding. A 'HIGH' region motif is present at residues 41 to 50 (PTADSLHIGH). L-tyrosine contacts are provided by Tyr170 and Gln174. The short motif at 231–235 (KFGKS) is the 'KMSKS' region element. Lys234 provides a ligand contact to ATP. Residues 353–420 (TNIVEVLIET…KKKYFMVNYQ (68 aa)) enclose the S4 RNA-binding domain.

This sequence belongs to the class-I aminoacyl-tRNA synthetase family. TyrS type 1 subfamily. Homodimer.

The protein localises to the cytoplasm. The catalysed reaction is tRNA(Tyr) + L-tyrosine + ATP = L-tyrosyl-tRNA(Tyr) + AMP + diphosphate + H(+). In terms of biological role, catalyzes the attachment of tyrosine to tRNA(Tyr) in a two-step reaction: tyrosine is first activated by ATP to form Tyr-AMP and then transferred to the acceptor end of tRNA(Tyr). In Staphylococcus aureus (strain bovine RF122 / ET3-1), this protein is Tyrosine--tRNA ligase.